The chain runs to 988 residues: Transposase for transposon Tn501 (988 aa).

This sequence belongs to the transposase 7 family.

Required for transposition of transposon Tn501. The sequence is that of Transposase for transposon Tn501 (tnpA) from Pseudomonas aeruginosa.